We begin with the raw amino-acid sequence, 688 residues long: Translation initiation factor IF-2 (688 aa).

A disordered region spans residues 53–101 (GAEKPSVADEFEVEEKVVRSKKNSNKNKKKGKANEDKRQDNFAGRQQTP). A compositionally biased stretch (basic residues) spans 71–83 (RSKKNSNKNKKKG). One can recognise a tr-type G domain in the interval 190–359 (ERPAVVTIMG…LLVSEVEEYK (170 aa)). The G1 stretch occupies residues 199–206 (GHVDHGKT). 199 to 206 (GHVDHGKT) lines the GTP pocket. The G2 stretch occupies residues 224–228 (GITQH). The interval 245–248 (DTPG) is G3. GTP-binding positions include 245 to 249 (DTPGH) and 299 to 302 (NKMD). A G4 region spans residues 299–302 (NKMD). A G5 region spans residues 335–337 (SAI).

It belongs to the TRAFAC class translation factor GTPase superfamily. Classic translation factor GTPase family. IF-2 subfamily.

It is found in the cytoplasm. In terms of biological role, one of the essential components for the initiation of protein synthesis. Protects formylmethionyl-tRNA from spontaneous hydrolysis and promotes its binding to the 30S ribosomal subunits. Also involved in the hydrolysis of GTP during the formation of the 70S ribosomal complex. This is Translation initiation factor IF-2 from Bacillus mycoides (strain KBAB4) (Bacillus weihenstephanensis).